The chain runs to 150 residues: Spore germination protein GerT (150 aa).

The protein resides in the spore coat. In terms of biological role, involved in spore germination. In Bacillus licheniformis (strain ATCC 14580 / DSM 13 / JCM 2505 / CCUG 7422 / NBRC 12200 / NCIMB 9375 / NCTC 10341 / NRRL NRS-1264 / Gibson 46), this protein is Spore germination protein GerT (gerT).